A 229-amino-acid polypeptide reads, in one-letter code: Lipoprotein-releasing system ATP-binding protein LolD (229 aa).

Residues Leu6–Leu226 form the ABC transporter domain. Ala42 to Ser49 is a binding site for ATP.

This sequence belongs to the ABC transporter superfamily. Lipoprotein translocase (TC 3.A.1.125) family. The complex is composed of two ATP-binding proteins (LolD) and two transmembrane proteins (LolC and LolE).

The protein resides in the cell inner membrane. In terms of biological role, part of the ABC transporter complex LolCDE involved in the translocation of mature outer membrane-directed lipoproteins, from the inner membrane to the periplasmic chaperone, LolA. Responsible for the formation of the LolA-lipoprotein complex in an ATP-dependent manner. The polypeptide is Lipoprotein-releasing system ATP-binding protein LolD (Chelativorans sp. (strain BNC1)).